The sequence spans 337 residues: DNA-directed RNA polymerase subunit alpha (337 aa).

Residues 1-233 (MVREKVTVST…DLFIPFLHIE (233 aa)) form an alpha N-terminal domain (alpha-NTD) region. The interval 265-337 (KKIALKSIFI…FVIDLAKNEF (73 aa)) is alpha C-terminal domain (alpha-CTD).

This sequence belongs to the RNA polymerase alpha chain family. In plastids the minimal PEP RNA polymerase catalytic core is composed of four subunits: alpha, beta, beta', and beta''. When a (nuclear-encoded) sigma factor is associated with the core the holoenzyme is formed, which can initiate transcription.

Its subcellular location is the plastid. It localises to the chloroplast. The enzyme catalyses RNA(n) + a ribonucleoside 5'-triphosphate = RNA(n+1) + diphosphate. Functionally, DNA-dependent RNA polymerase catalyzes the transcription of DNA into RNA using the four ribonucleoside triphosphates as substrates. In Nicotiana tomentosiformis (Tobacco), this protein is DNA-directed RNA polymerase subunit alpha.